The sequence spans 142 residues: Large ribosomal subunit protein uL13 (142 aa).

Belongs to the universal ribosomal protein uL13 family. In terms of assembly, part of the 50S ribosomal subunit.

Functionally, this protein is one of the early assembly proteins of the 50S ribosomal subunit, although it is not seen to bind rRNA by itself. It is important during the early stages of 50S assembly. This chain is Large ribosomal subunit protein uL13, found in Vibrio campbellii (strain ATCC BAA-1116).